Reading from the N-terminus, the 77-residue chain is Defensin-like protein (77 aa).

An N-terminal signal peptide occupies residues 1–30; the sequence is MERGMRLFSSLVLVLLLVTATEMGPKVAEA. Intrachain disulfides connect Cys-33/Cys-77, Cys-44/Cys-64, Cys-50/Cys-71, and Cys-54/Cys-73.

The protein belongs to the DEFL family.

The protein localises to the secreted. This Nelumbo nucifera (Sacred lotus) protein is Defensin-like protein.